Here is a 428-residue protein sequence, read N- to C-terminus: Cyclic AMP-responsive element-binding protein 3-like protein 4 (428 aa).

The required for transcriptional activation stretch occupies residues 1 to 68; that stretch reads MLLGSLFEQT…EFLQMMINPN (68 aa). Over 1-294 the chain is Cytoplasmic; sequence MLLGSLFEQT…QTSNKAAQTS (294 aa). The tract at residues 71 to 111 is disordered; the sequence is YSTGPAAAESPESDSGFSDDPRPDTPPQSETSPPLPQPTPV. Residues 216 to 279 form the bZIP domain; the sequence is ILKKVRRKIR…ISLITQLRKL (64 aa). Positions 218–247 are basic motif; it reads KKVRRKIRNKQSAQDSRRRKKEYIDGLESR. Residues 258 to 279 are leucine-zipper; the sequence is LHKKVVELEKHNISLITQLRKL. The helical; Signal-anchor for type II membrane protein transmembrane segment at 295–315 threads the bilayer; the sequence is TCVLILLFSLALLVFPSYSPF. Over 316 to 428 the chain is Lumenal; sequence RSRPSASQED…LSKTARADEM (113 aa). Residues 339–428 are disordered; the sequence is NKGGFSEVAD…LSKTARADEM (90 aa). A compositionally biased stretch (basic and acidic residues) spans 354–368; it reads TLHRAQQREEGDPGR. N418 carries an N-linked (GlcNAc...) asparagine glycan.

Belongs to the bZIP family. ATF subfamily. In terms of assembly, binds DNA as a dimer. In terms of processing, controlled by regulated intramembrane proteolysis (RIP). A fragment containing the cytoplasmic transcription factor domain is released by proteolysis. The cleavage seems to be performed sequentially by site-1 and site-2 proteases (PS1 and PS2).

It is found in the endoplasmic reticulum membrane. It localises to the nucleus. Functionally, transcriptional activator. The sequence is that of Cyclic AMP-responsive element-binding protein 3-like protein 4 (creb3l4) from Xenopus tropicalis (Western clawed frog).